We begin with the raw amino-acid sequence, 286 residues long: Pyridoxal kinase PdxY (286 aa).

Substrate contacts are provided by residues S9 and 44 to 45; that span reads TQ. ATP contacts are provided by residues D111, A143, E148, K181, and 208–211; that span reads RPLV. Substrate is bound at residue D223.

It belongs to the pyridoxine kinase family. PdxY subfamily. Homodimer. Requires Mg(2+) as cofactor.

It catalyses the reaction pyridoxal + ATP = pyridoxal 5'-phosphate + ADP + H(+). The protein operates within cofactor metabolism; pyridoxal 5'-phosphate salvage; pyridoxal 5'-phosphate from pyridoxal: step 1/1. Its function is as follows. Pyridoxal kinase involved in the salvage pathway of pyridoxal 5'-phosphate (PLP). Catalyzes the phosphorylation of pyridoxal to PLP. The sequence is that of Pyridoxal kinase PdxY from Yersinia pseudotuberculosis serotype I (strain IP32953).